Here is a 157-residue protein sequence, read N- to C-terminus: Nicotinate dehydrogenase small FeS subunit (157 aa).

The 77-residue stretch at 4 to 80 (ITINLNLNGE…ESTIITLEGV (77 aa)) folds into the 2Fe-2S ferredoxin-type domain. 8 residues coordinate [2Fe-2S] cluster: Cys42, Cys47, Cys50, Cys62, Cys101, Cys104, Cys136, and Cys138.

Heterooctamer of NDHM, NDHL, NDHS and NDHF. Dimer of heterotetramers. It depends on [2Fe-2S] cluster as a cofactor.

It carries out the reaction nicotinate + NADP(+) + H2O = 6-hydroxynicotinate + NADPH + H(+). The protein operates within cofactor degradation; nicotinate degradation; 6-hydroxynicotinate from nicotinate: step 1/1. With respect to regulation, reversibly inactivated by selenide and sulfide. Not inhibited by cyanide. Functionally, catalyzes the hydroxylation of nicotinate to 6-hydroxynicotinate. Also active against 2-pyrazinecarboxylic acid, but inactive against other nicotinate analogs. The polypeptide is Nicotinate dehydrogenase small FeS subunit (ndhS) (Eubacterium barkeri (Clostridium barkeri)).